The following is a 73-amino-acid chain: uncharacterized protein (73 aa).

This is an uncharacterized protein from Methanocaldococcus jannaschii (strain ATCC 43067 / DSM 2661 / JAL-1 / JCM 10045 / NBRC 100440) (Methanococcus jannaschii).